The primary structure comprises 527 residues: Bifunctional purine biosynthesis protein PurH (527 aa).

Positions 1–149 (MTADLLPVRR…KNFARVAVAT (149 aa)) constitute an MGS-like domain.

It belongs to the PurH family.

The enzyme catalyses (6R)-10-formyltetrahydrofolate + 5-amino-1-(5-phospho-beta-D-ribosyl)imidazole-4-carboxamide = 5-formamido-1-(5-phospho-D-ribosyl)imidazole-4-carboxamide + (6S)-5,6,7,8-tetrahydrofolate. It carries out the reaction IMP + H2O = 5-formamido-1-(5-phospho-D-ribosyl)imidazole-4-carboxamide. Its pathway is purine metabolism; IMP biosynthesis via de novo pathway; 5-formamido-1-(5-phospho-D-ribosyl)imidazole-4-carboxamide from 5-amino-1-(5-phospho-D-ribosyl)imidazole-4-carboxamide (10-formyl THF route): step 1/1. It functions in the pathway purine metabolism; IMP biosynthesis via de novo pathway; IMP from 5-formamido-1-(5-phospho-D-ribosyl)imidazole-4-carboxamide: step 1/1. In Stenotrophomonas maltophilia (strain R551-3), this protein is Bifunctional purine biosynthesis protein PurH.